The sequence spans 428 residues: Putative aspergillopepsin A-like aspartic endopeptidase AFUA_2G15950 (428 aa).

An N-terminal signal peptide occupies residues 1–19; the sequence is MHSLQSFLFLLLLGYGVFA. Residues 20-90 constitute a propeptide, activation peptide; it reads APTSPQAQSQ…GTAANLVTDV (71 aa). Residues 110–425 enclose the Peptidase A1 domain; the sequence is FVSPVTIGGQ…DLRGPSIGLA (316 aa). Asp126 is an active-site residue. Asn276 is a glycosylation site (N-linked (GlcNAc...) asparagine). Asp312 is an active-site residue. N-linked (GlcNAc...) asparagine glycosylation is present at Asn380.

This sequence belongs to the peptidase A1 family.

Its subcellular location is the secreted. The chain is Putative aspergillopepsin A-like aspartic endopeptidase AFUA_2G15950 from Aspergillus fumigatus (strain ATCC MYA-4609 / CBS 101355 / FGSC A1100 / Af293) (Neosartorya fumigata).